A 453-amino-acid polypeptide reads, in one-letter code: T-box transcription factor T homolog (453 aa).

Residues 47-217 (LWRRFSKLTN…YNPFAKAFLD (171 aa)) constitute a DNA-binding region (T-box). Positions 283-304 (RSHRSTPYPPPPYEQKYSPTSA) are disordered.

It localises to the nucleus. May be involved in the transcriptional regulation of genes required for gastrulation. This chain is T-box transcription factor T homolog, found in Patiria pectinifera (Starfish).